We begin with the raw amino-acid sequence, 278 residues long: MNTYHPFSLTTPSTLMIQDWAQTNQNNKEVIAGFTTKNGGVSQKPFESLNTGLHVHDKDADVVKNREYIADMFNTDLQSWVFADQTHDNRVQKVTQRDRGKGAREYHTALKATDGIYTNEKNVFLALCFADCVPLFFYDPVKSLVGVAHAGWKGTVKQIGREMVKQWTEKEGSNPSDIYAVIGPSISGACYTVDDRVMDAVRALPVSADLAANQTAKAQYQLDLKELNRLILMDSGLASEQISVSGLCTESEPSLFYSHRRDQGKTGRMMSFIGMKEA.

Zn(2+)-binding residues include His87, Cys132, and His149.

It belongs to the purine nucleoside phosphorylase YfiH/LACC1 family. In terms of assembly, homodimer. Cu(2+) serves as cofactor. Zn(2+) is required as a cofactor.

The catalysed reaction is adenosine + phosphate = alpha-D-ribose 1-phosphate + adenine. The enzyme catalyses S-methyl-5'-thioadenosine + phosphate = 5-(methylsulfanyl)-alpha-D-ribose 1-phosphate + adenine. It carries out the reaction inosine + phosphate = alpha-D-ribose 1-phosphate + hypoxanthine. It catalyses the reaction adenosine + H2O + H(+) = inosine + NH4(+). Purine nucleoside enzyme that catalyzes the phosphorolysis of adenosine and inosine nucleosides, yielding D-ribose 1-phosphate and the respective free bases, adenine and hypoxanthine. Also catalyzes the phosphorolysis of S-methyl-5'-thioadenosine into adenine and S-methyl-5-thio-alpha-D-ribose 1-phosphate. Also has adenosine deaminase activity. In Bacillus subtilis (strain 168), this protein is Purine nucleoside phosphorylase YlmD (ylmD).